A 243-amino-acid polypeptide reads, in one-letter code: Small ribosomal subunit protein uS2 (243 aa).

It belongs to the universal ribosomal protein uS2 family.

This is Small ribosomal subunit protein uS2 from Chromobacterium violaceum (strain ATCC 12472 / DSM 30191 / JCM 1249 / CCUG 213 / NBRC 12614 / NCIMB 9131 / NCTC 9757 / MK).